The following is a 581-amino-acid chain: Adenine deaminase (581 aa).

Belongs to the metallo-dependent hydrolases superfamily. Adenine deaminase family. Mn(2+) is required as a cofactor.

It carries out the reaction adenine + H2O + H(+) = hypoxanthine + NH4(+). This is Adenine deaminase from Lysinibacillus sphaericus (strain C3-41).